Consider the following 120-residue polypeptide: NAD(P)H-quinone oxidoreductase subunit 3 (120 aa).

The next 3 helical transmembrane spans lie at 10 to 30 (FLGFLIIAAAVPILALVTNLI), 64 to 84 (MFALVFVIFDVETVFLYPWAV), and 89 to 109 (LGLLAFIEALIFIAILVIALA).

The protein belongs to the complex I subunit 3 family. In terms of assembly, NDH-1 can be composed of about 15 different subunits; different subcomplexes with different compositions have been identified which probably have different functions.

Its subcellular location is the cellular thylakoid membrane. The catalysed reaction is a plastoquinone + NADH + (n+1) H(+)(in) = a plastoquinol + NAD(+) + n H(+)(out). The enzyme catalyses a plastoquinone + NADPH + (n+1) H(+)(in) = a plastoquinol + NADP(+) + n H(+)(out). NDH-1 shuttles electrons from an unknown electron donor, via FMN and iron-sulfur (Fe-S) centers, to quinones in the respiratory and/or the photosynthetic chain. The immediate electron acceptor for the enzyme in this species is believed to be plastoquinone. Couples the redox reaction to proton translocation, and thus conserves the redox energy in a proton gradient. Cyanobacterial NDH-1 also plays a role in inorganic carbon-concentration. This is NAD(P)H-quinone oxidoreductase subunit 3 from Prochlorococcus marinus (strain MIT 9515).